The following is a 48-amino-acid chain: MKNSKDILNNAIEEVSEKELMEVAGGKRGSGWIATITDDCPNSVFVCC.

Residues 1–26 constitute a propeptide that is removed on maturation; sequence MKNSKDILNNAIEEVSEKELMEVAGG. 2 cross-links (beta-methyllanthionine (Thr-Cys)) span residues 35 to 40 and 37 to 47; these read TITDDC and TDDCPNSVFVC. Positions 43-48 form a cross-link, lanthionine (Ser-Cys); that stretch reads SVFVCC.

It belongs to the type A lantibiotic family. Maturation of lantibiotics involves the enzymatic conversion of Thr, and Ser into dehydrated AA and the formation of thioether bonds with cysteine. This is followed by membrane translocation and cleavage of the modified precursor.

In terms of biological role, lanthionine-containing peptide antibiotic (lantibiotic) active on Gram-positive bacteria. The bactericidal activity of lantibiotics is based on depolarization of energized bacterial cytoplasmic membranes, initiated by the formation of aqueous transmembrane pores. The sequence is that of Lantibiotic salivaricin-A (salA) from Streptococcus salivarius.